The primary structure comprises 460 residues: Argininosuccinate lyase (460 aa).

It belongs to the lyase 1 family. Argininosuccinate lyase subfamily.

The protein resides in the cytoplasm. It catalyses the reaction 2-(N(omega)-L-arginino)succinate = fumarate + L-arginine. It participates in amino-acid biosynthesis; L-arginine biosynthesis; L-arginine from L-ornithine and carbamoyl phosphate: step 3/3. The protein is Argininosuccinate lyase of Prosthecochloris aestuarii (strain DSM 271 / SK 413).